The following is a 164-amino-acid chain: General odorant-binding protein 1 (164 aa).

Residues 1–19 form the signal peptide; that stretch reads MPGVLRALLLLAAAAPLLA. 3 cysteine pairs are disulfide-bonded: cysteine 38/cysteine 73, cysteine 69/cysteine 127, and cysteine 116/cysteine 136.

This sequence belongs to the PBP/GOBP family. In terms of tissue distribution, antenna.

Its function is as follows. Present in the aqueous fluid surrounding olfactory sensory dendrites and are thought to aid in the capture and transport of hydrophobic odorants into and through this fluid. This chain is General odorant-binding protein 1, found in Heliothis virescens (Tobacco budworm moth).